The primary structure comprises 68 residues: Small proline-rich protein 2K (68 aa).

The 1; truncated repeat unit spans residues 21-26; that stretch reads PKPCSP. Residues 21–65 form a 3.5 X 9 AA approximate tandem repeats region; sequence PKPCSPPKCPEPCPPPKCPETCPPQPCQRKCPPVLEAPCQQKCPS. 3 consecutive repeat copies span residues 27–35, 36–44, and 45–53.

The protein belongs to the cornifin (SPRR) family. As to expression, not expressed in uterus.

It localises to the cytoplasm. In terms of biological role, cross-linked envelope protein of keratinocytes. It is a keratinocyte protein that first appears in the cell cytosol, but ultimately becomes cross-linked to membrane proteins by transglutaminase. All that results in the formation of an insoluble envelope beneath the plasma membrane. This chain is Small proline-rich protein 2K (Sprr2k), found in Mus musculus (Mouse).